The following is a 402-amino-acid chain: UPF0261 protein BP1203 (402 aa).

Belongs to the UPF0261 family.

The polypeptide is UPF0261 protein BP1203 (Bordetella pertussis (strain Tohama I / ATCC BAA-589 / NCTC 13251)).